The primary structure comprises 123 residues: IHPTSVISGYRYISENLIINTDELGRDCLINAAKLGVQVVITDPEKLDQIRYFVEAGAMAVRSVVPGGGAVEAALSIYLENYATSMGSREQLAIAEFARAFHNEAQVNPERKFATEAAITILR.

Residue Gly-68 participates in ADP binding.

It belongs to the TCP-1 chaperonin family. As to quaternary structure, component of the chaperonin-containing T-complex (TRiC), a hexadecamer composed of two identical back-to-back stacked rings enclosing a protein folding chamber. Each ring is made up of eight different subunits: TCP1/CCT1, CCT2, CCT3, CCT4, CCT5, CCT6A/CCT6, CCT7, CCT8. Interacts with PACRG. Interacts with GBA1. Interacts with DLEC1.

Its subcellular location is the cytoplasm. The protein resides in the cytosol. It is found in the cytoskeleton. It localises to the microtubule organizing center. The protein localises to the centrosome. The catalysed reaction is ATP + H2O = ADP + phosphate + H(+). In terms of biological role, component of the chaperonin-containing T-complex (TRiC), a molecular chaperone complex that assists the folding of actin, tubulin and other proteins upon ATP hydrolysis. The TRiC complex mediates the folding of WRAP53/TCAB1, thereby regulating telomere maintenance. As part of the TRiC complex may play a role in the assembly of BBSome, a complex involved in ciliogenesis regulating transports vesicles to the cilia. The sequence is that of T-complex protein 1 subunit alpha from Mesocricetus auratus (Golden hamster).